A 312-amino-acid chain; its full sequence is Terpene synthase 8 (312 aa).

A DDxx(x)D/E motif motif is present at residues 96–101 (DDYIYE). The short motif at 224 to 232 (NDCGSFKME) is the NDxxSxxxD/E motif element.

Belongs to the terpene synthase family.

The enzyme catalyses (2E,6E)-farnesyl diphosphate + H2O = discoidol + diphosphate. It participates in sesquiterpene biosynthesis. Terpene synthase; part of the gene cluster that mediates the biosynthesis of the trisnorsesquiterpene discodiene which has a function during later stages of multicellular development, during the transition from fingers to Mexican hats. The terpene synthase tps8 converts its substrate farnesyl diphosphate (FDP) into the bicyclic sesquiterpene alcohol discoidol. The cytochrome P450 monooxygenase cyp521A1 then catalyzes the oxidative degradation of discoidol to form the trisnorsesquiterpene discodiene. The polypeptide is Terpene synthase 8 (Dictyostelium discoideum (Social amoeba)).